A 105-amino-acid chain; its full sequence is Nucleoid-associated protein MXAN_1931 (105 aa).

This sequence belongs to the YbaB/EbfC family. As to quaternary structure, homodimer.

Its subcellular location is the cytoplasm. The protein localises to the nucleoid. In terms of biological role, binds to DNA and alters its conformation. May be involved in regulation of gene expression, nucleoid organization and DNA protection. The chain is Nucleoid-associated protein MXAN_1931 from Myxococcus xanthus (strain DK1622).